The following is a 688-amino-acid chain: Translation initiation factor IF-2 (688 aa).

The segment at 53 to 101 (GAEKPSVADEFEVEEKVVRSKKNSNKNKKKGKANEDKRQDNFAGRQQTP) is disordered. Basic residues predominate over residues 71-83 (RSKKNSNKNKKKG). One can recognise a tr-type G domain in the interval 190–359 (ERPAVVTIMG…LLVSEVEEYK (170 aa)). The segment at 199-206 (GHVDHGKT) is G1. Position 199–206 (199–206 (GHVDHGKT)) interacts with GTP. The G2 stretch occupies residues 224–228 (GITQH). The interval 245 to 248 (DTPG) is G3. GTP contacts are provided by residues 245 to 249 (DTPGH) and 299 to 302 (NKMD). The G4 stretch occupies residues 299–302 (NKMD). A G5 region spans residues 335 to 337 (SAI).

The protein belongs to the TRAFAC class translation factor GTPase superfamily. Classic translation factor GTPase family. IF-2 subfamily.

The protein localises to the cytoplasm. One of the essential components for the initiation of protein synthesis. Protects formylmethionyl-tRNA from spontaneous hydrolysis and promotes its binding to the 30S ribosomal subunits. Also involved in the hydrolysis of GTP during the formation of the 70S ribosomal complex. This is Translation initiation factor IF-2 from Bacillus mycoides (strain KBAB4) (Bacillus weihenstephanensis).